The following is a 174-amino-acid chain: ATP-dependent protease subunit HslV (174 aa).

The active site involves Thr2. Na(+) contacts are provided by Gly157, Cys160, and Thr163.

The protein belongs to the peptidase T1B family. HslV subfamily. A double ring-shaped homohexamer of HslV is capped on each side by a ring-shaped HslU homohexamer. The assembly of the HslU/HslV complex is dependent on binding of ATP.

It is found in the cytoplasm. The enzyme catalyses ATP-dependent cleavage of peptide bonds with broad specificity.. Its activity is regulated as follows. Allosterically activated by HslU binding. In terms of biological role, protease subunit of a proteasome-like degradation complex believed to be a general protein degrading machinery. The protein is ATP-dependent protease subunit HslV of Shewanella halifaxensis (strain HAW-EB4).